The sequence spans 443 residues: Probable glycine dehydrogenase (decarboxylating) subunit 1 (443 aa).

This sequence belongs to the GcvP family. N-terminal subunit subfamily. The glycine cleavage system is composed of four proteins: P, T, L and H. In this organism, the P 'protein' is a heterodimer of two subunits.

The enzyme catalyses N(6)-[(R)-lipoyl]-L-lysyl-[glycine-cleavage complex H protein] + glycine + H(+) = N(6)-[(R)-S(8)-aminomethyldihydrolipoyl]-L-lysyl-[glycine-cleavage complex H protein] + CO2. The glycine cleavage system catalyzes the degradation of glycine. The P protein binds the alpha-amino group of glycine through its pyridoxal phosphate cofactor; CO(2) is released and the remaining methylamine moiety is then transferred to the lipoamide cofactor of the H protein. The sequence is that of Probable glycine dehydrogenase (decarboxylating) subunit 1 from Chlorobium limicola (strain DSM 245 / NBRC 103803 / 6330).